The following is a 486-amino-acid chain: UDP-N-acetylmuramate--L-alanine ligase (486 aa).

126–132 (GTHGKTS) is a binding site for ATP.

The protein belongs to the MurCDEF family.

Its subcellular location is the cytoplasm. The catalysed reaction is UDP-N-acetyl-alpha-D-muramate + L-alanine + ATP = UDP-N-acetyl-alpha-D-muramoyl-L-alanine + ADP + phosphate + H(+). It functions in the pathway cell wall biogenesis; peptidoglycan biosynthesis. Its function is as follows. Cell wall formation. The sequence is that of UDP-N-acetylmuramate--L-alanine ligase from Buchnera aphidicola subsp. Baizongia pistaciae (strain Bp).